Here is a 376-residue protein sequence, read N- to C-terminus: N6-methyladenosine RNA methyltransferase MTA1 (376 aa).

The segment at Thr53–Leu78 is disordered.

Belongs to the MT-A70-like family.

The catalysed reaction is an adenosine in mRNA + S-adenosyl-L-methionine = an N(6)-methyladenosine in mRNA + S-adenosyl-L-homocysteine + H(+). In terms of biological role, N6-methyladenosine RNA methyltransferase that plays a crucial role in fungal phenotypic traits, virulence, and stress tolerance. Mediates the methylation of mRNAs to produce N6-methyladenosine (m6A)-containing mRNAs. M6A is a modification present at internal sites of mRNAs and some non-coding RNAs and plays a role in mRNA stability and processing. Required for appressorium turgor pressure and regulates autophagosome formation during appressorium formation stage. Specifically, mediates the stability of ATG8 mRNA in a m6A-dependent manner via modification of the m6A site A982 located in 3'UTR region. This Pyricularia oryzae (strain 70-15 / ATCC MYA-4617 / FGSC 8958) (Rice blast fungus) protein is N6-methyladenosine RNA methyltransferase MTA1.